An 834-amino-acid polypeptide reads, in one-letter code: Leucine--tRNA ligase (834 aa).

The 'HIGH' region signature appears at 40 to 50 (PYPSGNIHMGH). Residues 586–590 (KMSKS) carry the 'KMSKS' region motif. Position 589 (lysine 589) interacts with ATP.

The protein belongs to the class-I aminoacyl-tRNA synthetase family.

It localises to the cytoplasm. The enzyme catalyses tRNA(Leu) + L-leucine + ATP = L-leucyl-tRNA(Leu) + AMP + diphosphate. The sequence is that of Leucine--tRNA ligase from Nitratidesulfovibrio vulgaris (strain DSM 19637 / Miyazaki F) (Desulfovibrio vulgaris).